The primary structure comprises 484 residues: MKLIVKVFPEITIKSPPVRKRFIRQLAKNIRTVLRDLDPELAVTGVWDNLEVETAVEKPRLLREMIERLCCTPGIAHFLEVHEYPLGDLDDILEKCKRHYAGQLPGKIFAVRCKRAGRHPFTSMEVERYVGGCLRQQCGAAGVSLSAPEVEVRMEIRDQRLFVVHRQHDSIGGYPLGALEQTLVLMSGGFDSTVAAFQTMRRGLMTHFCFFNLGGRAHELGVMEVAHYLWQKYGSSQRVLFVSVPFEEVVGEILGKVDNSQMGVILKRMMLRAATRVAERLKIDALVTGEAISQVSSQTLPNLSVIDSATDMLVLRPLIASHKQDIIDTATRIGTAEFARHMPEYCGVISVNPTTRARRDRIDYEERQFDMAILERALERAHLVPIDRVIDELGEEICVEEVREALAGQIVLDIRHPEAVEDGPLELPGIEVRALPFYALNNRFKELDSNRQYLLYCDKGVMSRLHAHHLLSEGHANVRVYRPA.

The THUMP domain occupies 63 to 167; it reads REMIERLCCT…DQRLFVVHRQ (105 aa). ATP-binding positions include 185-186, Lys-267, Gly-289, and Gln-298; that span reads LM. A disulfide bond links Cys-346 and Cys-457. The Rhodanese domain maps to 405–483; the sequence is ALAGQIVLDI…GHANVRVYRP (79 aa). The active-site Cysteine persulfide intermediate is Cys-457.

Belongs to the ThiI family.

The protein localises to the cytoplasm. It carries out the reaction [ThiI sulfur-carrier protein]-S-sulfanyl-L-cysteine + a uridine in tRNA + 2 reduced [2Fe-2S]-[ferredoxin] + ATP + H(+) = [ThiI sulfur-carrier protein]-L-cysteine + a 4-thiouridine in tRNA + 2 oxidized [2Fe-2S]-[ferredoxin] + AMP + diphosphate. It catalyses the reaction [ThiS sulfur-carrier protein]-C-terminal Gly-Gly-AMP + S-sulfanyl-L-cysteinyl-[cysteine desulfurase] + AH2 = [ThiS sulfur-carrier protein]-C-terminal-Gly-aminoethanethioate + L-cysteinyl-[cysteine desulfurase] + A + AMP + 2 H(+). It participates in cofactor biosynthesis; thiamine diphosphate biosynthesis. Functionally, catalyzes the ATP-dependent transfer of a sulfur to tRNA to produce 4-thiouridine in position 8 of tRNAs, which functions as a near-UV photosensor. Also catalyzes the transfer of sulfur to the sulfur carrier protein ThiS, forming ThiS-thiocarboxylate. This is a step in the synthesis of thiazole, in the thiamine biosynthesis pathway. The sulfur is donated as persulfide by IscS. In Azotobacter vinelandii (strain DJ / ATCC BAA-1303), this protein is tRNA sulfurtransferase.